The following is a 399-amino-acid chain: Transaminase BacF (399 aa).

Residues 103 to 104 (GK), Tyr-128, Asn-178, Tyr-209, and 236 to 238 (SFS) each bind pyridoxal 5'-phosphate. Position 239 is an N6-(pyridoxal phosphate)lysine (Lys-239). Pyridoxal 5'-phosphate is bound at residue Arg-247.

The protein belongs to the class-I pyridoxal-phosphate-dependent aminotransferase family. Homodimer. Requires pyridoxal 5'-phosphate as cofactor.

Its subcellular location is the cytoplasm. It participates in antibiotic biosynthesis; bacilysin biosynthesis. In terms of biological role, part of the bacABCDEF operon responsible for the biosynthesis of the nonribosomally synthesized dipeptide antibiotic bacilysin, composed of L-alanine and L-anticapsin. Bacilysin is an irreversible inactivator of the glutaminase domain of glucosamine synthetase. Catalyzes the reductive amination of the C2 ketone of tetrahydro-hydroxyphenylpyruvate (H4HPP), with L-Phe as an amino donor, to yield tetrahydrotyrosine (H4Tyr) diastereomer. D-Phe is not an effective amino donor. BacF associated to BacG converts 3E,7R- and 3Z,7R-ex-H2HPP to 2S,4R,7R- and 2S,4S,7R-H4Tyr, respectively. Given that bacilysin has the 2S,4S stereochemistry in its anticapsin moiety, it is likely that the 2S,4S-H4Tyr is the diastereomer used for the biosynthesis. This Bacillus subtilis (strain 168) protein is Transaminase BacF.